The following is a 419-amino-acid chain: E3 ubiquitin-protein ligase RNF130 (419 aa).

The first 27 residues, Met-1 to Ala-27, serve as a signal peptide directing secretion. The Extracellular segment spans residues Asp-28–Ser-194. Asn-29, Asn-40, Asn-112, Asn-135, Asn-172, and Asn-189 each carry an N-linked (GlcNAc...) asparagine glycan. The region spanning Ile-105–Gln-176 is the PA domain. A helical membrane pass occupies residues Leu-195–Phe-217. At Ile-218–Phe-419 the chain is on the cytoplasmic side. The segment at Cys-264–Lys-305 adopts an RING-type zinc-finger fold. Ser-341 bears the Phosphoserine mark.

In terms of tissue distribution, in testis sections, expressed in interstitial tissue and seminiferous tubules. In tubules, expression is mainly in postmeiotic germ cells and to a much lesser extent in Sertoli cells (at protein level). Expressed at high levels in liver, lung, stomach, heart and thymus.

The protein localises to the membrane. It is found in the cytoplasm. The enzyme catalyses S-ubiquitinyl-[E2 ubiquitin-conjugating enzyme]-L-cysteine + [acceptor protein]-L-lysine = [E2 ubiquitin-conjugating enzyme]-L-cysteine + N(6)-ubiquitinyl-[acceptor protein]-L-lysine.. It participates in protein modification; protein ubiquitination. In terms of biological role, acts as an E3 ubiquitin-protein ligase. May have a role during the programmed cell death of hematopoietic cells. The polypeptide is E3 ubiquitin-protein ligase RNF130 (Rattus norvegicus (Rat)).